We begin with the raw amino-acid sequence, 990 residues long: Aminopeptidase Q (990 aa).

Residues 2 to 13 (GPPSSSGFYVSR) are Cytoplasmic-facing. The helical; Signal-anchor for type II membrane protein transmembrane segment at 14-34 (AVALLLAGLVAALLLALAVLA) threads the bilayer. The Lumenal segment spans residues 35–990 (ALYGHCERVP…RIAAWLRRNT (956 aa)). The interval 48-91 (LPGLRDLEAESSPPLRQKPTPTPKPSSARELAVTTTPSNWRPPG) is disordered. 2 N-linked (GlcNAc...) asparagine glycosylation sites follow: Asn-132 and Asn-168. Glu-240 is a substrate binding site. Asn-261, Asn-288, Asn-319, and Asn-346 each carry an N-linked (GlcNAc...) asparagine glycan. 379–383 (HAMEN) lines the substrate pocket. Zn(2+) is bound at residue His-415. The active-site Proton acceptor is the Glu-416. Residues His-419 and Glu-438 each coordinate Zn(2+). Tyr-503 serves as the catalytic Proton donor. Asn-607 and Asn-653 each carry an N-linked (GlcNAc...) asparagine glycan.

The protein belongs to the peptidase M1 family. In terms of assembly, homodimer. Requires Zn(2+) as cofactor. Post-translationally, N-glycosylated. In terms of tissue distribution, specifically expressed in placenta and not in other tissues. Mainly found at the cell surface region of the extravillous trophoblasts. Detected on extravillous trophoblasts in the outer layer of the chorion laeve in the fetal membrane Not detected on either fetal amnionic epithelial cells or maternal decidual cells. Also detected in the migrating extravillous trophoblasts in the maternal decidual tissues (at protein level).

It is found in the membrane. Its activity is regulated as follows. Inhibited by bestatin. In terms of biological role, metalloprotease which may be important for placentation by regulating biological activity of key peptides at the embryo-maternal interface. On synthetic substrates it shows a marked preference for Leu-4-methylcoumaryl-7-amide (Leu-MCA) over Met-MCA, Arg-LCA and Lys-LCA. Cleaves the N-terminal amino acid of several peptides such as angiotensin-3, kisspeptin-10 and endokinin C. The polypeptide is Aminopeptidase Q (Homo sapiens (Human)).